A 123-amino-acid chain; its full sequence is Small ribosomal subunit protein uS12 (123 aa).

Residue aspartate 89 is modified to 3-methylthioaspartic acid.

It belongs to the universal ribosomal protein uS12 family. As to quaternary structure, part of the 30S ribosomal subunit. Contacts proteins S8 and S17. May interact with IF1 in the 30S initiation complex.

In terms of biological role, with S4 and S5 plays an important role in translational accuracy. Interacts with and stabilizes bases of the 16S rRNA that are involved in tRNA selection in the A site and with the mRNA backbone. Located at the interface of the 30S and 50S subunits, it traverses the body of the 30S subunit contacting proteins on the other side and probably holding the rRNA structure together. The combined cluster of proteins S8, S12 and S17 appears to hold together the shoulder and platform of the 30S subunit. This Rhodopseudomonas palustris (strain HaA2) protein is Small ribosomal subunit protein uS12.